The chain runs to 200 residues: Small ribosomal subunit protein uS4 (200 aa).

The disordered stretch occupies residues Thr22–Lys43. Positions Gln92–Glu170 constitute an S4 RNA-binding domain.

The protein belongs to the universal ribosomal protein uS4 family. In terms of assembly, part of the 30S ribosomal subunit. Contacts protein S5. The interaction surface between S4 and S5 is involved in control of translational fidelity.

Its function is as follows. One of the primary rRNA binding proteins, it binds directly to 16S rRNA where it nucleates assembly of the body of the 30S subunit. With S5 and S12 plays an important role in translational accuracy. This chain is Small ribosomal subunit protein uS4, found in Listeria monocytogenes serovar 1/2a (strain ATCC BAA-679 / EGD-e).